We begin with the raw amino-acid sequence, 118 residues long: Large ribosomal subunit protein bL20 (118 aa).

The protein belongs to the bacterial ribosomal protein bL20 family.

Functionally, binds directly to 23S ribosomal RNA and is necessary for the in vitro assembly process of the 50S ribosomal subunit. It is not involved in the protein synthesizing functions of that subunit. This Pectobacterium atrosepticum (strain SCRI 1043 / ATCC BAA-672) (Erwinia carotovora subsp. atroseptica) protein is Large ribosomal subunit protein bL20.